The primary structure comprises 432 residues: UDP-N-acetylmuramate--L-alanine ligase (432 aa).

108–114 serves as a coordination point for ATP; it reads GAHGKTS.

This sequence belongs to the MurCDEF family.

The protein localises to the cytoplasm. It carries out the reaction UDP-N-acetyl-alpha-D-muramate + L-alanine + ATP = UDP-N-acetyl-alpha-D-muramoyl-L-alanine + ADP + phosphate + H(+). The protein operates within cell wall biogenesis; peptidoglycan biosynthesis. Cell wall formation. The chain is UDP-N-acetylmuramate--L-alanine ligase from Bacillus velezensis (strain DSM 23117 / BGSC 10A6 / LMG 26770 / FZB42) (Bacillus amyloliquefaciens subsp. plantarum).